The following is a 162-amino-acid chain: Protein NrdI (162 aa).

The protein belongs to the NrdI family.

Its function is as follows. Probably involved in ribonucleotide reductase function. The sequence is that of Protein NrdI from Streptococcus pyogenes serotype M3 (strain ATCC BAA-595 / MGAS315).